Here is a 249-residue protein sequence, read N- to C-terminus: Type III pantothenate kinase (249 aa).

6–13 contacts ATP; it reads DCGNSFIK. Substrate-binding positions include Y93 and 100–103; that span reads GLDR. D102 serves as the catalytic Proton acceptor. D122 contributes to the K(+) binding site. T125 is a binding site for ATP. Residue T181 coordinates substrate.

It belongs to the type III pantothenate kinase family. Homodimer. NH4(+) serves as cofactor. Requires K(+) as cofactor.

Its subcellular location is the cytoplasm. It catalyses the reaction (R)-pantothenate + ATP = (R)-4'-phosphopantothenate + ADP + H(+). It functions in the pathway cofactor biosynthesis; coenzyme A biosynthesis; CoA from (R)-pantothenate: step 1/5. Catalyzes the phosphorylation of pantothenate (Pan), the first step in CoA biosynthesis. The polypeptide is Type III pantothenate kinase (Pseudomonas savastanoi pv. phaseolicola (strain 1448A / Race 6) (Pseudomonas syringae pv. phaseolicola (strain 1448A / Race 6))).